The sequence spans 140 residues: Large ribosomal subunit protein uL11 (140 aa).

This sequence belongs to the universal ribosomal protein uL11 family. As to quaternary structure, part of the ribosomal stalk of the 50S ribosomal subunit. Interacts with L10 and the large rRNA to form the base of the stalk. L10 forms an elongated spine to which L12 dimers bind in a sequential fashion forming a multimeric L10(L12)X complex. Post-translationally, one or more lysine residues are methylated.

Functionally, forms part of the ribosomal stalk which helps the ribosome interact with GTP-bound translation factors. This is Large ribosomal subunit protein uL11 from Karelsulcia muelleri (strain GWSS) (Sulcia muelleri).